The following is a 153-amino-acid chain: uncharacterized protein (153 aa).

The next 2 membrane-spanning stretches (helical) occupy residues 1-21 (MAAT…LFFS) and 106-126 (IVPI…TVYI).

The protein resides in the membrane. This is an uncharacterized protein from Saccharomyces cerevisiae (strain ATCC 204508 / S288c) (Baker's yeast).